A 254-amino-acid polypeptide reads, in one-letter code: Ribonuclease PH (254 aa).

Residues Arg90 and 128–130 contribute to the phosphate site; that span reads GTR.

It belongs to the RNase PH family. Homohexameric ring arranged as a trimer of dimers.

It catalyses the reaction tRNA(n+1) + phosphate = tRNA(n) + a ribonucleoside 5'-diphosphate. Functionally, phosphorolytic 3'-5' exoribonuclease that plays an important role in tRNA 3'-end maturation. Removes nucleotide residues following the 3'-CCA terminus of tRNAs; can also add nucleotides to the ends of RNA molecules by using nucleoside diphosphates as substrates, but this may not be physiologically important. Probably plays a role in initiation of 16S rRNA degradation (leading to ribosome degradation) during starvation. This is Ribonuclease PH from Corynebacterium kroppenstedtii (strain DSM 44385 / JCM 11950 / CIP 105744 / CCUG 35717).